The following is a 626-amino-acid chain: Probable potassium transport system protein Kup (626 aa).

A run of 12 helical transmembrane segments spans residues 13 to 33, 53 to 73, 102 to 122, 138 to 158, 169 to 189, 207 to 227, 248 to 268, 277 to 297, 338 to 358, 367 to 387, 399 to 419, and 421 to 441; these read VALM…SPLY, VLSI…VLLI, FFVV…MITP, HTLD…LFAI, LFGP…GWQV, FVFE…LALT, WFSM…ALLL, PFFL…ATVA, IYLP…VITF, AYGF…FAVL, WMLV…ANIF, and IHEG…LMMT.

Belongs to the HAK/KUP transporter (TC 2.A.72) family.

It localises to the cell inner membrane. It catalyses the reaction K(+)(in) + H(+)(in) = K(+)(out) + H(+)(out). Transport of potassium into the cell. Likely operates as a K(+):H(+) symporter. The sequence is that of Probable potassium transport system protein Kup from Bordetella avium (strain 197N).